The chain runs to 450 residues: Glucose-6-phosphate isomerase (450 aa).

Thr-39 is modified (phosphothreonine). The active-site Proton donor is the Glu-291. Catalysis depends on residues His-312 and Lys-426.

The protein belongs to the GPI family.

The protein resides in the cytoplasm. The catalysed reaction is alpha-D-glucose 6-phosphate = beta-D-fructose 6-phosphate. It participates in carbohydrate biosynthesis; gluconeogenesis. The protein operates within carbohydrate degradation; glycolysis; D-glyceraldehyde 3-phosphate and glycerone phosphate from D-glucose: step 2/4. Its function is as follows. Catalyzes the reversible isomerization of glucose-6-phosphate to fructose-6-phosphate. The polypeptide is Glucose-6-phosphate isomerase (Bacillus cytotoxicus (strain DSM 22905 / CIP 110041 / 391-98 / NVH 391-98)).